Reading from the N-terminus, the 233-residue chain is Lipoprotein-releasing system ATP-binding protein LolD (233 aa).

The 224-residue stretch at 10–233 folds into the ABC transporter domain; that stretch reads YRLEGVGKEY…AGELYDQHRP (224 aa). 46 to 53 contacts ATP; it reads GASGSGKS.

It belongs to the ABC transporter superfamily. Lipoprotein translocase (TC 3.A.1.125) family. The complex is composed of two ATP-binding proteins (LolD) and two transmembrane proteins (LolC and LolE).

Its subcellular location is the cell inner membrane. Functionally, part of the ABC transporter complex LolCDE involved in the translocation of mature outer membrane-directed lipoproteins, from the inner membrane to the periplasmic chaperone, LolA. Responsible for the formation of the LolA-lipoprotein complex in an ATP-dependent manner. The polypeptide is Lipoprotein-releasing system ATP-binding protein LolD (Nitratidesulfovibrio vulgaris (strain ATCC 29579 / DSM 644 / CCUG 34227 / NCIMB 8303 / VKM B-1760 / Hildenborough) (Desulfovibrio vulgaris)).